The following is a 459-amino-acid chain: Biphenyl dioxygenase subunit alpha (459 aa).

A Rieske domain is found at 58 to 156; it reads WLLLGHESHV…KEGDCGFDKA (99 aa). [2Fe-2S] cluster is bound by residues Cys100, His102, Cys120, and His123. His233 and His239 together coordinate Fe cation.

This sequence belongs to the bacterial ring-hydroxylating dioxygenase alpha subunit family. In terms of assembly, heterohexamer consisting of three BphA subunits and three BphE subunits. A ferredoxin (BphF) and a ferredoxin reductase (BphG) must be present to obtain activity. [2Fe-2S] cluster is required as a cofactor. Requires Fe cation as cofactor.

The catalysed reaction is biphenyl + NADH + O2 + H(+) = (2R,3S)-3-phenylcyclohexa-3,5-diene-1,2-diol + NAD(+). The protein operates within xenobiotic degradation; biphenyl degradation; 2-hydroxy-2,4-pentadienoate and benzoate from biphenyl: step 1/4. In Paraburkholderia xenovorans (strain LB400), this protein is Biphenyl dioxygenase subunit alpha (bphA).